The primary structure comprises 523 residues: SWI/SNF and RSC complexes subunit arp9 (523 aa).

The span at 56 to 72 shows a compositional bias: basic and acidic residues; sequence INMEDPNVKTDETKVET. Disordered stretches follow at residues 56 to 92 and 319 to 339; these read INMEDPNVKTDETKVETSESTSEQPSNSNVTEEKNMG and QKEREKNGESEKDEKPDNTDV. Over residues 79–92 the composition is skewed to polar residues; the sequence is QPSNSNVTEEKNMG. Basic and acidic residues predominate over residues 319–336; the sequence is QKEREKNGESEKDEKPDN.

It belongs to the actin family. As to quaternary structure, component of the RSC complex composed of at least arp9, arp42, rsc1, rsc4, rsc7, rsc9, rsc58, sfh1, snf21, ssr1, ssr2, ssr3 and ssr4. The complex interacts with histone and histone variant components of centromeric chromatin. Component of the SWI/SNF global transcription activator complex composed of at least arp9, arp42, snf5, snf22, snf30, sbf59, sol1, ssr1, ssr2, ssr3, ssr4 and tfg3.

The protein localises to the cytoplasm. Its subcellular location is the nucleus. Its function is as follows. Component of the chromatin structure remodeling complex (RSC), which is involved in transcription regulation and nucleosome positioning. Controls particularly membrane and organelle development genes. Part of the SWI/SNF complex, an ATP-dependent chromatin remodeling complex, required for the positive and negative regulation of gene expression of a large number of genes. It changes chromatin structure by altering DNA-histone contacts within a nucleosome, leading eventually to a change in nucleosome position, thus facilitating or repressing binding of gene-specific transcription factors. This is SWI/SNF and RSC complexes subunit arp9 (arp9) from Schizosaccharomyces pombe (strain 972 / ATCC 24843) (Fission yeast).